Consider the following 657-residue polypeptide: MKLGFEIQRALQGLLNKAAVDGGAYGHLIQHFTRHRLPLHVLQLHARIVVFSIKPDNFLASKLISFYTRQDRFRQALHVFDEITVRNAFSYNALLIAYTSREMYFDAFSLFLSWIGSSCYSSDAARPDSISISCVLKALSGCDDFWLGSLARQVHGFVIRGGFDSDVFVGNGMITYYTKCDNIESARKVFDEMSERDVVSWNSMISGYSQSGSFEDCKKMYKAMLACSDFKPNGVTVISVFQACGQSSDLIFGLEVHKKMIENHIQMDLSLCNAVIGFYAKCGSLDYARALFDEMSEKDSVTYGAIISGYMAHGLVKEAMALFSEMESIGLSTWNAMISGLMQNNHHEEVINSFREMIRCGSRPNTVTLSSLLPSLTYSSNLKGGKEIHAFAIRNGADNNIYVTTSIIDNYAKLGFLLGAQRVFDNCKDRSLIAWTAIITAYAVHGDSDSACSLFDQMQCLGTKPDDVTLTAVLSAFAHSGDSDMAQHIFDSMLTKYDIEPGVEHYACMVSVLSRAGKLSDAMEFISKMPIDPIAKVWGALLNGASVLGDLEIARFACDRLFEMEPENTGNYTIMANLYTQAGRWEEAEMVRNKMKRIGLKKIPGTSWIETEKGLRSFIAKDSSCERSKEMYEIIEGLVESMSDKEYIRKQELDEAY.

PPR repeat units lie at residues 21–55, 56–86, 87–121, 128–165, 166–196, 197–232, 233–267, 268–298, 299–333, 334–364, 365–399, 400–430, 431–465, 466–501, and 502–536; these read DGGAYGHLIQHFTRHRLPLHVLQLHARIVVFSIKP, DNFLASKLISFYTRQDRFRQALHVFDEITVR, NAFSYNALLIAYTSREMYFDAFSLFLSWIGSSCYS, DSISISCVLKALSGCDDFWLGSLARQVHGFVIRGGFDS, DVFVGNGMITYYTKCDNIESARKVFDEMSER, DVVSWNSMISGYSQSGSFEDCKKMYKAMLACSDFKP, NGVTVISVFQACGQSSDLIFGLEVHKKMIENHIQM, DLSLCNAVIGFYAKCGSLDYARALFDEMSEK, DSVTYGAIISGYMAHGLVKEAMALFSEMESIGLST, WNAMISGLMQNNHHEEVINSFREMIRCGSRP, NTVTLSSLLPSLTYSSNLKGGKEIHAFAIRNGADN, NIYVTTSIIDNYAKLGFLLGAQRVFDNCKDR, SLIAWTAIITAYAVHGDSDSACSLFDQMQCLGTKP, DDVTLTAVLSAFAHSGDSDMAQHIFDSMLTKYDIEP, and GVEHYACMVSVLSRAGKLSDAMEFISKMPIDPIAK. Positions 537 to 612 are type E motif; it reads VWGALLNGAS…IPGTSWIETE (76 aa). The segment at 613 to 643 is type E(+) motif; sequence KGLRSFIAKDSSCERSKEMYEIIEGLVESMS.

This sequence belongs to the PPR family. PCMP-E subfamily.

The polypeptide is Pentatricopeptide repeat-containing protein At2g37310 (PCMP-E49) (Arabidopsis thaliana (Mouse-ear cress)).